The following is a 397-amino-acid chain: Argininosuccinate synthase (397 aa).

Residue 9 to 17 coordinates ATP; sequence AYSGGLDTS. Tyrosine 85 is a binding site for L-citrulline. Glycine 115 contacts ATP. Residues threonine 117, asparagine 121, and aspartate 122 each contribute to the L-aspartate site. Asparagine 121 is an L-citrulline binding site. Arginine 125, serine 173, glutamate 258, and tyrosine 270 together coordinate L-citrulline.

Belongs to the argininosuccinate synthase family. Type 1 subfamily. In terms of assembly, homotetramer.

The protein localises to the cytoplasm. It carries out the reaction L-citrulline + L-aspartate + ATP = 2-(N(omega)-L-arginino)succinate + AMP + diphosphate + H(+). It functions in the pathway amino-acid biosynthesis; L-arginine biosynthesis; L-arginine from L-ornithine and carbamoyl phosphate: step 2/3. The polypeptide is Argininosuccinate synthase (Streptococcus suis (strain 05ZYH33)).